A 449-amino-acid polypeptide reads, in one-letter code: Tubulin alpha-2 chain (449 aa).

GTP-binding residues include Gln-11, Glu-71, Ser-140, Gly-144, Thr-145, Thr-179, Asn-206, and Asn-228. Glu-71 contributes to the Mg(2+) binding site. The active site involves Glu-254.

This sequence belongs to the tubulin family. Dimer of alpha and beta chains. A typical microtubule is a hollow water-filled tube with an outer diameter of 25 nm and an inner diameter of 15 nM. Alpha-beta heterodimers associate head-to-tail to form protofilaments running lengthwise along the microtubule wall with the beta-tubulin subunit facing the microtubule plus end conferring a structural polarity. Microtubules usually have 13 protofilaments but different protofilament numbers can be found in some organisms and specialized cells. Mg(2+) serves as cofactor.

The protein localises to the cytoplasm. It localises to the cytoskeleton. The catalysed reaction is GTP + H2O = GDP + phosphate + H(+). Its function is as follows. Tubulin is the major constituent of microtubules, a cylinder consisting of laterally associated linear protofilaments composed of alpha- and beta-tubulin heterodimers. Microtubules grow by the addition of GTP-tubulin dimers to the microtubule end, where a stabilizing cap forms. Below the cap, tubulin dimers are in GDP-bound state, owing to GTPase activity of alpha-tubulin. The chain is Tubulin alpha-2 chain (tub1) from Schizosaccharomyces pombe (strain 972 / ATCC 24843) (Fission yeast).